A 459-amino-acid polypeptide reads, in one-letter code: Probable ECA polymerase (459 aa).

11 helical membrane-spanning segments follow: residues 3 to 23 (LTQF…ILTL), 37 to 57 (IFFS…TCLL), 65 to 85 (VVPV…YGIY), 119 to 139 (LASV…FLLF), 154 to 174 (GVAL…VYFL), 181 to 201 (WLFF…VVGG), 206 to 226 (IIIA…ITLW), 227 to 247 (MLVT…LKRY), 340 to 360 (LVVM…GLII), 377 to 397 (YKAA…IVLA), and 409 to 429 (VFFC…YWLF).

This sequence belongs to the WzyE family. As to quaternary structure, probably part of a complex composed of WzxE, WzyE and WzzE.

The protein resides in the cell inner membrane. It participates in bacterial outer membrane biogenesis; enterobacterial common antigen biosynthesis. Probably involved in the polymerization of enterobacterial common antigen (ECA) trisaccharide repeat units. The chain is Probable ECA polymerase from Photorhabdus laumondii subsp. laumondii (strain DSM 15139 / CIP 105565 / TT01) (Photorhabdus luminescens subsp. laumondii).